The chain runs to 137 residues: 1,4-dihydroxy-2-naphthoyl-CoA hydrolase (137 aa).

Asp-12 is a catalytic residue.

It belongs to the 4-hydroxybenzoyl-CoA thioesterase family. DHNA-CoA hydrolase subfamily.

The catalysed reaction is 1,4-dihydroxy-2-naphthoyl-CoA + H2O = 1,4-dihydroxy-2-naphthoate + CoA + H(+). It participates in cofactor biosynthesis; phylloquinone biosynthesis. The protein operates within quinol/quinone metabolism; 1,4-dihydroxy-2-naphthoate biosynthesis; 1,4-dihydroxy-2-naphthoate from chorismate: step 7/7. Catalyzes the hydrolysis of 1,4-dihydroxy-2-naphthoyl-CoA (DHNA-CoA) to 1,4-dihydroxy-2-naphthoate (DHNA), a reaction involved in phylloquinone (vitamin K1) biosynthesis. This is 1,4-dihydroxy-2-naphthoyl-CoA hydrolase from Acaryochloris marina (strain MBIC 11017).